A 77-amino-acid chain; its full sequence is Tachyplesin-2 (77 aa).

The first 23 residues, 1–23 (MKKLVIALCLMMVLAVMVEEAEA), serve as a signal peptide directing secretion. Intrachain disulfides connect Cys26–Cys39 and Cys30–Cys35. At Arg40 the chain carries Arginine amide. Residues 41–77 (GKRNEVRQYRDRGYDVRAIPDETFFTRQDEDEDDDEE) constitute a propeptide that is removed on maturation.

It belongs to the tachyplesin/polyphemusin family. As to expression, hemocytes.

The protein localises to the secreted. In terms of biological role, significantly inhibits the growth of Gram-negative and Gram-positive bacteria. The sequence is that of Tachyplesin-2 from Tachypleus tridentatus (Japanese horseshoe crab).